The following is a 323-amino-acid chain: Small ribosomal subunit protein uS9m (323 aa).

Residues 298–323 (TRDARKVERKKPGKVKARKSPTWVKR) form a disordered region. A compositionally biased stretch (basic residues) spans 304–323 (VERKKPGKVKARKSPTWVKR).

Belongs to the universal ribosomal protein uS9 family.

It localises to the mitochondrion. The polypeptide is Small ribosomal subunit protein uS9m (MRPS9) (Debaryomyces hansenii (strain ATCC 36239 / CBS 767 / BCRC 21394 / JCM 1990 / NBRC 0083 / IGC 2968) (Yeast)).